Reading from the N-terminus, the 92-residue chain is RQC P-site tRNA stabilizing factor (92 aa).

The S4 RNA-binding domain maps to 5–65 (MRLDKYLKVS…GPKIVTAKIE (61 aa)).

Belongs to the RqcP family. As to quaternary structure, associates with stalled 50S ribosomal subunits. Binds to RqcH, 23S rRNA and the P-site tRNA. Does not require RqcH for association with 50S subunits.

Key component of the ribosome quality control system (RQC), a ribosome-associated complex that mediates the extraction of incompletely synthesized nascent chains from stalled ribosomes and their subsequent degradation. RqcH recruits Ala-charged tRNA, and with RqcP directs the elongation of stalled nascent chains on 50S ribosomal subunits, leading to non-templated C-terminal alanine extensions (Ala tail). The Ala tail promotes nascent chain degradation. RqcP is associated with the translocation-like movement of the peptidyl-tRNA from the A-site into the P-site. This Listeria monocytogenes serovar 1/2a (strain ATCC BAA-679 / EGD-e) protein is RQC P-site tRNA stabilizing factor.